Reading from the N-terminus, the 427-residue chain is MFGRSFPFYNSLGGFYPQSLDARKPPGSGYTSKVRVRDRYHIVGFISSGTYGRVYKAIGKNGQKGEFAIKKFKPDKEGEIIQYTGLSQSAIREMALCSELDHPNVVQLAEIILEDKCIFMVFEYTEHDLLQIIHHHTQPQRHAIPALMVRSILFQLLNGLLYLHTNWVLHRDLKPANILVTSSGAIRIGDLGLARLFYKPLNSLFSGDKVVVTIWYRAPELLMGSRHYTPAVDLWAVGCIFAELLSLRPIFKGEEAKMDSKKTVPFQRNQMMKIIEIMGLPTKEIWPGIVSMPEYSQLQSLAMSRAPGHFNRSSNLEGWYQSCLKNNGYSANSSAGTPGADGFDLLSRLLEYDPTKRITAQEALEHPYFKNGGPISANCFEGFEGKYPHRRVTQDDNDIRSGSLPGTKRSGLPDDSLLGRATKRLKE.

The region spanning 40–369 (YHIVGFISSG…AQEALEHPYF (330 aa)) is the Protein kinase domain. Residues 46-54 (ISSGTYGRV) and Lys-70 each bind ATP. The active-site Proton acceptor is the Asp-172. A compositionally biased stretch (basic and acidic residues) spans 390–399 (RRVTQDDNDI). The tract at residues 390–427 (RRVTQDDNDIRSGSLPGTKRSGLPDDSLLGRATKRLKE) is disordered.

Belongs to the protein kinase superfamily. CMGC Ser/Thr protein kinase family. CDC2/CDKX subfamily. In terms of assembly, component of the srb8-11 complex, a regulatory module of the Mediator complex. Requires Mg(2+) as cofactor.

It is found in the nucleus. The catalysed reaction is L-seryl-[protein] + ATP = O-phospho-L-seryl-[protein] + ADP + H(+). It catalyses the reaction L-threonyl-[protein] + ATP = O-phospho-L-threonyl-[protein] + ADP + H(+). The enzyme catalyses [DNA-directed RNA polymerase] + ATP = phospho-[DNA-directed RNA polymerase] + ADP + H(+). Functionally, component of the srb8-11 complex. The srb8-11 complex is a regulatory module of the Mediator complex which is itself involved in regulation of basal and activated RNA polymerase II-dependent transcription. The srb8-11 complex may be involved in the transcriptional repression of a subset of genes regulated by Mediator. It may inhibit the association of the Mediator complex with RNA polymerase II to form the holoenzyme complex. The srb8-11 complex phosphorylates the C-terminal domain (CTD) of the largest subunit of RNA polymerase II. The sequence is that of Serine/threonine-protein kinase ssn3 (ssn3) from Aspergillus niger (strain ATCC MYA-4892 / CBS 513.88 / FGSC A1513).